Consider the following 459-residue polypeptide: MTLDLNPNDMSHVVAADRAHVWHHLSQHKQYETIDPRVFVEGKGMRLWDATGREFLDAVSGGVWTVNVGYGRESIADAIRDQLVKLNYYAGAAGTVPGAIFAQKLIEKMPGMTRVYYSNSGSEANEKVYKMVRQIAARHHGGKKWKILYRDRDYHGTTIATLATSGQDQRAIAYGPFPDGFVRVPHCLEYRKQWDVENYGERAADAIEEVILREGPDTVGAIVLEPVTAGGGVITPPEGYWQRVQEICRKYDILLHIDEVVCGLGRTGTWFGYQQYGIEPDFVTMAKGVASGYAAISCTVTTERVFEMFKDAPEDGMSFFRDISTFGGCTSGPVAAIENMRIIEDEGLLDNTVAMGERTLANLNALMEKHKVIGDVRGKGLFCGAELVADRASKEPMDEKKVQAVVADCLAQGVIIGATNRSLPGFNNTLCLSPALIATADNIDRITDAIDNALTKVFA.

At K287 the chain carries N6-(pyridoxal phosphate)lysine.

It belongs to the class-III pyridoxal-phosphate-dependent aminotransferase family. It depends on pyridoxal 5'-phosphate as a cofactor.

The catalysed reaction is hypotaurine + pyruvate = 2-sulfinoacetaldehyde + L-alanine. It carries out the reaction taurine + pyruvate = sulfoacetaldehyde + L-alanine. The protein operates within organosulfur degradation. Converts hypotaurine to alanine and sulfinoacetaldehyde, which desulfinates spontaneously to acetaldehyde and sulfite. Can also catalyze the degradation of taurine into alanine and sulfoacetaldehyde, which is stable. Has 2-fold higher aminotransferase activity with hypotaurine as the substrate. This chain is Hypotaurine/taurine--pyruvate aminotransferase, found in Paracoccus denitrificans (strain Pd 1222).